Consider the following 160-residue polypeptide: Peptidyl-prolyl cis-trans isomerase CYP18-1 (160 aa).

The PPIase cyclophilin-type domain maps to 3–153; it reads VTLHTNLGDI…AEIRLNRVTI (151 aa).

Belongs to the cyclophilin-type PPIase family. In terms of tissue distribution, ubiquitous.

It is found in the cytoplasm. The catalysed reaction is [protein]-peptidylproline (omega=180) = [protein]-peptidylproline (omega=0). Functionally, PPIases accelerate the folding of proteins. It catalyzes the cis-trans isomerization of proline imidic peptide bonds in oligopeptides. The protein is Peptidyl-prolyl cis-trans isomerase CYP18-1 (CYP18-1) of Arabidopsis thaliana (Mouse-ear cress).